The chain runs to 266 residues: Protein SCO2 homolog, mitochondrial (266 aa).

Residues 1–41 (MLLLTRSPTAWHRLSQLKPRVLPGTLGGQALHLRSWLLSRQ) constitute a mitochondrion transit peptide. Topologically, residues 42–60 (GPAETGGQGQPQGPGLRTR) are mitochondrial matrix. Residues 61–78 (LLITGLFGAGLGGAWLAL) traverse the membrane as a helical segment. The Mitochondrial intermembrane portion of the chain corresponds to 79-266 (RAEKERLQQQ…HMAAFRSVLS (188 aa)). In terms of domain architecture, Thioredoxin spans 85 to 259 (LQQQKRTEAL…ISDSVRRHMA (175 aa)). Cu cation-binding residues include Cys-133, Cys-137, and His-224. Cys-133 and Cys-137 are oxidised to a cystine.

This sequence belongs to the SCO1/2 family. Homodimer. Interacts with COA6. Found in a complex with TMEM177, COX20, COA6, MT-CO2/COX2, COX18 and SCO1. Interacts with TMEM177 in a COX20-dependent manner. Interacts with COX20 in a MT-CO2/COX2- and COX18-dependent manner. Interacts with COX16. As to expression, ubiquitous.

The protein localises to the mitochondrion inner membrane. Copper metallochaperone essential for the synthesis and maturation of cytochrome c oxidase subunit II (MT-CO2/COX2) by facilitating the incorporation of copper into the Cu(A) site of MT-CO2/COX2. Could also act as a thiol-disulfide oxidoreductase to regulate the redox state of the cysteines in SCO1 during maturation of MT-CO2/COX2. This chain is Protein SCO2 homolog, mitochondrial (SCO2), found in Homo sapiens (Human).